The primary structure comprises 221 residues: Thiamine-phosphate synthase (221 aa).

Residues 44-48 and Asn-79 contribute to the 4-amino-2-methyl-5-(diphosphooxymethyl)pyrimidine site; that span reads QFREK. Mg(2+)-binding residues include Asp-80 and Asp-99. Ser-117 contacts 4-amino-2-methyl-5-(diphosphooxymethyl)pyrimidine. 143–145 contacts 2-[(2R,5Z)-2-carboxy-4-methylthiazol-5(2H)-ylidene]ethyl phosphate; it reads TRS. Position 146 (Lys-146) interacts with 4-amino-2-methyl-5-(diphosphooxymethyl)pyrimidine. Residues Gly-175 and 195 to 196 each bind 2-[(2R,5Z)-2-carboxy-4-methylthiazol-5(2H)-ylidene]ethyl phosphate; that span reads IS.

This sequence belongs to the thiamine-phosphate synthase family. It depends on Mg(2+) as a cofactor.

The enzyme catalyses 2-[(2R,5Z)-2-carboxy-4-methylthiazol-5(2H)-ylidene]ethyl phosphate + 4-amino-2-methyl-5-(diphosphooxymethyl)pyrimidine + 2 H(+) = thiamine phosphate + CO2 + diphosphate. It carries out the reaction 2-(2-carboxy-4-methylthiazol-5-yl)ethyl phosphate + 4-amino-2-methyl-5-(diphosphooxymethyl)pyrimidine + 2 H(+) = thiamine phosphate + CO2 + diphosphate. It catalyses the reaction 4-methyl-5-(2-phosphooxyethyl)-thiazole + 4-amino-2-methyl-5-(diphosphooxymethyl)pyrimidine + H(+) = thiamine phosphate + diphosphate. Its pathway is cofactor biosynthesis; thiamine diphosphate biosynthesis; thiamine phosphate from 4-amino-2-methyl-5-diphosphomethylpyrimidine and 4-methyl-5-(2-phosphoethyl)-thiazole: step 1/1. Functionally, condenses 4-methyl-5-(beta-hydroxyethyl)thiazole monophosphate (THZ-P) and 2-methyl-4-amino-5-hydroxymethyl pyrimidine pyrophosphate (HMP-PP) to form thiamine monophosphate (TMP). In Geobacillus thermodenitrificans (strain NG80-2), this protein is Thiamine-phosphate synthase.